The sequence spans 20 residues: Small ribosomal subunit protein bS20 (20 aa).

This sequence belongs to the bacterial ribosomal protein bS20 family.

Binds directly to 16S ribosomal RNA. This is Small ribosomal subunit protein bS20 (rpsT) from Brevundimonas diminuta (Pseudomonas diminuta).